Consider the following 157-residue polypeptide: MNLDGSAQDPEKREYSSVCVGREDDIKKSERMTAVVHDREVVIFYHKGEYHAMDIRCYHSGGPLHLGDIEDFDGRPCIVCPWHKYKITLATGEGLYQSINPKDPSAKPKWCSKGIKQRIHTVTVDNGNIYVTLSNEPFKCDSDFYATGDFKVIKSSS.

Methionine 1 is subject to N-acetylmethionine. Serine 6 is modified (phosphoserine). Rieske domains lie at 16–94 (SSVC…TGEG) and 17–131 (SVCV…NIYV). Cysteine 57, histidine 59, cysteine 80, and histidine 83 together coordinate [2Fe-2S] cluster.

[2Fe-2S] cluster is required as a cofactor.

This is Rieske domain-containing protein (RFESD) from Homo sapiens (Human).